The primary structure comprises 271 residues: Bifunctional protein FolD (271 aa).

Residues 154–156 (GRS), Ser181, and Ile222 contribute to the NADP(+) site.

This sequence belongs to the tetrahydrofolate dehydrogenase/cyclohydrolase family. As to quaternary structure, homodimer.

It carries out the reaction (6R)-5,10-methylene-5,6,7,8-tetrahydrofolate + NADP(+) = (6R)-5,10-methenyltetrahydrofolate + NADPH. The catalysed reaction is (6R)-5,10-methenyltetrahydrofolate + H2O = (6R)-10-formyltetrahydrofolate + H(+). The protein operates within one-carbon metabolism; tetrahydrofolate interconversion. Catalyzes the oxidation of 5,10-methylenetetrahydrofolate to 5,10-methenyltetrahydrofolate and then the hydrolysis of 5,10-methenyltetrahydrofolate to 10-formyltetrahydrofolate. In Thermotoga maritima (strain ATCC 43589 / DSM 3109 / JCM 10099 / NBRC 100826 / MSB8), this protein is Bifunctional protein FolD.